A 255-amino-acid polypeptide reads, in one-letter code: Developmental and secondary metabolism regulator MVE1 (255 aa).

Positions 31–226 (GRKLTYRMSV…AEQGCRVRIR (196 aa)) constitute a Velvet domain. The short motif at 45–50 (VRARAC) is the Nuclear localization signal element. 2 disordered regions span residues 163–184 (CKSP…DAHV) and 229–255 (VRMR…QARA). The segment covering 245–255 (NYEDETAQARA) has biased composition (acidic residues).

It belongs to the velvet family. VeA subfamily. As to quaternary structure, component of the heterotrimeric velvet complex composed of LAE1, MVE1 and VEL2; MVE1 acting as a bridging protein between LAE1 and VEL2.

The protein localises to the nucleus. The protein resides in the cytoplasm. In terms of biological role, component of the velvet transcription factor complex that controls sexual/asexual developmental ratio in response to light, promoting sexual development in the darkness while stimulating asexual sporulation under illumination. The velvet complex hat acts as a global regulator for secondary metabolite gene expression. Controls the expression of the melanin gene cluster. Mediates the light-stimulated formation of aerial mycelia. The protein is Developmental and secondary metabolism regulator MVE1 of Zymoseptoria tritici (strain CBS 115943 / IPO323) (Speckled leaf blotch fungus).